The primary structure comprises 397 residues: Linalool dehydratase/isomerase (397 aa).

An N-terminal signal peptide occupies residues Met-1–Ala-26. The Proton donor/acceptor role is filled by Asp-64. Disulfide bonds link Cys-74-Cys-127 and Cys-196-Cys-205. Cys-196 serves as a coordination point for (2E)-geraniol.

As to quaternary structure, homotetramer. Homopentamer.

The protein localises to the periplasm. The catalysed reaction is (S)-linalool = beta-myrcene + H2O. The enzyme catalyses (2E)-geraniol = (S)-linalool. The protein operates within terpene metabolism; monoterpene degradation. With respect to regulation, is inhibited by molecular oxygen, high salt concentrations (NaCl, KCl, or MgCl(2)), urea, and Ti(III)citrate. Activity is not affected by EDTA. Its function is as follows. Anaerobically catalyzes the stereospecific hydration of beta-myrcene to (3S)-linalool and the isomerization of (3S)-linalool to geraniol. Is thus involved in the initial steps of the anaerobic degradation of the monoterpene beta-myrcene. Also catalyzes the reverse reactions, i.e. the isomerization of geraniol to linalool and the dehydration of linalool to myrcene. In this direction, the formation of myrcene from geraniol may be seen as a detoxification process for the monoterpene alcohol. Shows a relatively broad substrate specificity and can use various geraniol and linalool derivatives. Substrates required a specific alpha-methylallyl alcohol signature motif. Neither the monoterpenes alpha- and beta-ocimene nor the monoterpenoids citronellol and nerol can be used as substrates. The protein is Linalool dehydratase/isomerase of Castellaniella defragrans (strain DSM 12143 / CCUG 39792 / 65Phen) (Alcaligenes defragrans).